A 421-amino-acid chain; its full sequence is Cytochrome c biogenesis protein Ccs1 (421 aa).

The next 3 helical transmembrane spans lie at 12 to 32 (LRFA…GTVI), 71 to 91 (TWWF…CTLL), and 157 to 177 (IAPI…IIGS).

This sequence belongs to the Ccs1/CcsB family. In terms of assembly, may interact with CcsA.

The protein localises to the plastid. It is found in the chloroplast thylakoid membrane. Its function is as follows. Required during biogenesis of c-type cytochromes (cytochrome c6 and cytochrome f) at the step of heme attachment. This is Cytochrome c biogenesis protein Ccs1 from Thalassiosira pseudonana (Marine diatom).